A 164-amino-acid polypeptide reads, in one-letter code: MLTHLDDQGRAHMVDVGDKAVTQRQAQAQADVRMQPATLDLLVAGELPKGDVLATARIAGIMAAKRTADLIPLCHPLPLSSVAIEIEAHPAQSLLRIISTVRCTGRTGVEMEALMAASVAALTIYDMAKAVDRAMVIEQVFVRNKTGGARGDFQHPLTPLDTSE.

Substrate-binding positions include 73–75 and 111–112; these read LCH and ME. D126 is a catalytic residue.

It belongs to the MoaC family. Homohexamer; trimer of dimers.

The catalysed reaction is (8S)-3',8-cyclo-7,8-dihydroguanosine 5'-triphosphate = cyclic pyranopterin phosphate + diphosphate. Its pathway is cofactor biosynthesis; molybdopterin biosynthesis. Functionally, catalyzes the conversion of (8S)-3',8-cyclo-7,8-dihydroguanosine 5'-triphosphate to cyclic pyranopterin monophosphate (cPMP). This chain is Cyclic pyranopterin monophosphate synthase, found in Herpetosiphon aurantiacus (strain ATCC 23779 / DSM 785 / 114-95).